The primary structure comprises 206 residues: Large ribosomal subunit protein eL13y (206 aa).

The segment at 182–206 is disordered; sequence LERTNKRHAGARAKRAADAEKEEKK. Residues 186 to 195 show a composition bias toward basic residues; it reads NKRHAGARAK. Positions 196–206 are enriched in basic and acidic residues; it reads RAADAEKEEKK.

This sequence belongs to the eukaryotic ribosomal protein eL13 family.

This is Large ribosomal subunit protein eL13y from Brassica napus (Rape).